Consider the following 166-residue polypeptide: Signal peptidase complex catalytic subunit SEC11 (166 aa).

Residues 1–9 (MNLRQQLTQ) lie on the Cytoplasmic side of the membrane. A helical; Signal-anchor for type II membrane protein transmembrane segment spans residues 10–31 (LLSIAYVFTSAFVAWKALSIVA). The Lumenal portion of the chain corresponds to 32-166 (NSHSPIVVVL…MGLSALLSGE (135 aa)). Active-site charge relay system residues include Ser-44, His-83, and Asp-108. The segment at 152–163 (ALLGFMGLSALL) is C-terminal short (CTS) helix.

Belongs to the peptidase S26B family. As to quaternary structure, component of the signal peptidase complex (SPC) composed of a catalytic subunit SEC11 and three accessory subunits SPC1, SPC2 and SPC3. The complex induces a local thinning of the ER membrane which is used to measure the length of the signal peptide (SP) h-region of protein substrates. This ensures the selectivity of the complex towards h-regions shorter than 18-20 amino acids. SPC associates with the translocon complex.

It localises to the endoplasmic reticulum membrane. It catalyses the reaction Cleavage of hydrophobic, N-terminal signal or leader sequences from secreted and periplasmic proteins.. Catalytic component of the signal peptidase complex (SPC) which catalyzes the cleavage of N-terminal signal sequences from nascent proteins as they are translocated into the lumen of the endoplasmic reticulum. Specifically cleaves N-terminal signal peptides that contain a hydrophobic alpha-helix (h-region) shorter than 18-20 amino acids. This Clavispora lusitaniae (strain ATCC 42720) (Yeast) protein is Signal peptidase complex catalytic subunit SEC11 (SEC11).